The following is a 481-amino-acid chain: Aspartyl/glutamyl-tRNA(Asn/Gln) amidotransferase subunit B (481 aa).

It belongs to the GatB/GatE family. GatB subfamily. As to quaternary structure, heterotrimer of A, B and C subunits.

The catalysed reaction is L-glutamyl-tRNA(Gln) + L-glutamine + ATP + H2O = L-glutaminyl-tRNA(Gln) + L-glutamate + ADP + phosphate + H(+). It catalyses the reaction L-aspartyl-tRNA(Asn) + L-glutamine + ATP + H2O = L-asparaginyl-tRNA(Asn) + L-glutamate + ADP + phosphate + 2 H(+). Its function is as follows. Allows the formation of correctly charged Asn-tRNA(Asn) or Gln-tRNA(Gln) through the transamidation of misacylated Asp-tRNA(Asn) or Glu-tRNA(Gln) in organisms which lack either or both of asparaginyl-tRNA or glutaminyl-tRNA synthetases. The reaction takes place in the presence of glutamine and ATP through an activated phospho-Asp-tRNA(Asn) or phospho-Glu-tRNA(Gln). This Carboxydothermus hydrogenoformans (strain ATCC BAA-161 / DSM 6008 / Z-2901) protein is Aspartyl/glutamyl-tRNA(Asn/Gln) amidotransferase subunit B.